Reading from the N-terminus, the 284-residue chain is Protein pxr1 (284 aa).

Residues T25–T71 form the G-patch domain. The tract at residues D149–S253 is disordered. S159 and S160 each carry phosphoserine. Composition is skewed to basic residues over residues E166–T181 and T196–K206. 2 stretches are compositionally biased toward basic and acidic residues: residues D207–E224 and K233–N249.

Belongs to the PINX1 family.

The protein resides in the nucleus. Its subcellular location is the nucleolus. Functionally, involved in rRNA-processing at A0, A1 and A2 sites and negatively regulates telomerase. This chain is Protein pxr1 (pxr1), found in Schizosaccharomyces pombe (strain 972 / ATCC 24843) (Fission yeast).